Here is a 511-residue protein sequence, read N- to C-terminus: MRIGPVELSAVKDWDPAPGVLVSWHPTPASCAKALAAPVSAVPPSYVQARQIRSFSEQAARGLDHSRLLIASVEVFGHCDLRAMTYVINAHLRRHDTYRSWFELRDTDHIVRHSIADPADIEFVPTTHGEMTSADLRQHIVATPDSLHWDCFSFGVIQRADSFTFYASIDHLHADGQFVGVGLMEFQSMYTALIMGEPPIGLSEAGSYVDFCVRQHEYTSALTVDSPEVRAWIDFAEINNGTFPEFPLPLGDPSVRCGGDLLSMMLMDEQQTQRFESACMAANARFIGGILACIAIAIHELTGADTYFGITPKDIRTPADLMTQGWFTGQIPVTVPVAGLSFNEIARIAQTSFDTGADLAKVPFERVVELSPSLRRPQPLFSLVNFFDAQVGPLSAVTKLFEGLNVGTYSDGRVTYPLSTMVGRFDETAASVLFPDNPVARESVTAYLRAIRSVCMRIANGGTAERVGNVVALSPGRRNNIERMTWRSCRAGDFIDICNLKVANVTVDREA.

Belongs to the PapA acyltransferase family.

The catalysed reaction is a (hydroxy)phthioceranyl-[(hydroxy)phthioceranic acid synthase] + 2'-palmitoyl/stearoyl-2-O-sulfo-alpha,alpha-trehalose = a 3'-(hydroxy)phthioceranyl-2'-palmitoyl/stearoyl-2-O-sulfo-alpha,alpha-trehalose + holo-[(hydroxy)phthioceranic acid synthase].. Functionally, required for the biosynthesis of sulfolipid-1 (SL-1), a major mycobacterial cell wall lipid. Catalyzes the acylation of trehalose-2-sulfate-2'-palmitate (SL659) by adding the (hydroxy)phthioceranoyl group at the 3'-position to yield the diacylated intermediate 2-palmitoyl-3-(C43)-phthioceranyl-alpha, alpha'-D-trehalose-2'-sulfate (SL1278). The protein is 2'-acyl-2-O-sulfo-trehalose (hydroxy)phthioceranyltransferase PapA1 (papA1) of Mycobacterium tuberculosis (strain CDC 1551 / Oshkosh).